Consider the following 935-residue polypeptide: Progesterone receptor (935 aa).

The AF3; mediates transcriptional activation stretch occupies residues 1–164 (MTELKAKGPR…PATQGVLSPL (164 aa)). The segment at 1–254 (MTELKAKGPR…GGAAAGGGAA (254 aa)) is disordered. Residues 1 to 568 (MTELKAKGPR…YSFESLPQKI (568 aa)) form a modulating, Pro-Rich region. Serine 20 bears the Phosphoserine mark. The LXXL motif 1 signature appears at 55 to 59 (LDGLL). Phosphoserine is present on serine 81. The LXXL motif 2 signature appears at 115–119 (LDTLL). Phosphoserine occurs at positions 130 and 162. The mediates transcriptional transrepression stretch occupies residues 165-305 (MSRSGGKAGD…LATTVMDFIH (141 aa)). The Nuclear localization signal signature appears at 183-187 (KVLPR). Serine 190 and serine 213 each carry phosphoserine. The span at 220-231 (EVEEEDGSESED) shows a compositional bias: acidic residues. Residues 232 to 246 (SAGPLLKGKPRALGG) are compositionally biased toward low complexity. A Phosphoserine; by MAPK1 modification is found at serine 294. The tract at residues 331 to 378 (GGAGAASAFAPPRSSPSASSTPVAVGDFPDCAYPPDAEPKDDAYPLYS) is disordered. Residues 335-350 (AASAFAPPRSSPSASS) are compositionally biased toward low complexity. Serine 345 carries the phosphoserine; by MAPK modification. Lysine 388 participates in a covalent cross-link: Glycyl lysine isopeptide (Lys-Gly) (interchain with G-Cter in SUMO); alternate. A Glycyl lysine isopeptide (Lys-Gly) (interchain with G-Cter in ubiquitin); alternate cross-link involves residue lysine 388. Serine 400 is modified (phosphoserine; by CDK2). Residues 418–430 (PLGPPPPLPPRAP) are compositionally biased toward pro residues. The interval 418-438 (PLGPPPPLPPRAPPTRAGEAA) is disordered. Positions 456-548 (STLECILYKA…VYPPYLNYLR (93 aa)) are AF1; mediates transcriptional activation. Residue lysine 533 forms a Glycyl lysine isopeptide (Lys-Gly) (interchain with G-Cter in SUMO) linkage. 2 NR C4-type zinc fingers span residues 569-589 (CLIC…CGSC) and 605-629 (CAGR…LRKC). A DNA-binding region (nuclear receptor) is located at residues 569–641 (CLICGDEASG…AGMVLGGRKF (73 aa)). A Phosphoserine modification is found at serine 678. Residues 681-915 (QDIQLIPPLI…EFPEMMSEVI (235 aa)) enclose the NR LBD domain. Residues 689–935 (LINLLMSIEP…MVKPLLFHKK (247 aa)) are AF2; mediates transcriptional activation.

The protein belongs to the nuclear hormone receptor family. Interacts with SMARD1 and UNC45A. Interacts with CUEDC2; the interaction promotes ubiquitination, decreases sumoylation, and represses transcriptional activity. Interacts with PIAS3; the interaction promotes sumoylation of PR in a hormone-dependent manner, inhibits DNA-binding, and alters nuclear export. Interacts with SP1; the interaction requires ligand-induced phosphorylation on Ser-345 by ERK1/2-MAPK. Interacts with PRMT2. Interacts with NCOA2 and NCOA1. Interacts with KLF9. Interacts with GTF2B. Phosphorylated on multiple serine sites. Several of these sites are hormone-dependent. Phosphorylation on Ser-294 is highly hormone-dependent and modulates ubiquitination and sumoylation on Lys-388. Phosphorylation on Ser-102 and Ser-345 also requires induction by hormone. Basal phosphorylation on Ser-81, Ser-162, Ser-190 and Ser-400 is increased in response to progesterone and can be phosphorylated in vitro by the CDK2-A1 complex. Increased levels of phosphorylation on Ser-400 also in the presence of EGF, heregulin, IGF, PMA and FBS. Phosphorylation at this site by CDK2 is ligand-independent, and increases nuclear translocation and transcriptional activity. Phosphorylation at Ser-162 and Ser-294, but not at Ser-190, is impaired during the G(2)/M phase of the cell cycle. Phosphorylation on Ser-345 by ERK1/2 MAPK is required for interaction with SP1. Post-translationally, sumoylation is hormone-dependent and represses transcriptional activity. Sumoylation on all three sites is enhanced by PIAS3. Desumoylated by SENP1. Sumoylation on Lys-388, the main site of sumoylation, is repressed by ubiquitination on the same site, and modulated by phosphorylation at Ser-294. In terms of processing, ubiquitination is hormone-dependent and represses sumoylation on the same site. Promoted by MAPK-mediated phosphorylation on Ser-294. Palmitoylated by ZDHHC7 and ZDHHC21. Palmitoylation is required for plasma membrane targeting and for rapid intracellular signaling via ERK and AKT kinases and cAMP generation.

Its subcellular location is the nucleus. The protein localises to the cytoplasm. In terms of biological role, the steroid hormones and their receptors are involved in the regulation of eukaryotic gene expression and affect cellular proliferation and differentiation in target tissues. Transcriptional activator of several progesteron-dependent promoters in a variety of cell types. Involved in activation of SRC-dependent MAPK signaling on hormone stimulation. This is Progesterone receptor (PGR) from Pongo pygmaeus (Bornean orangutan).